Consider the following 676-residue polypeptide: DNA-directed RNA polymerase subunit beta' (676 aa).

Zn(2+) is bound by residues C69, C71, C87, and C90. Mg(2+) is bound by residues D485, D487, and D489.

It belongs to the RNA polymerase beta' chain family. RpoC1 subfamily. As to quaternary structure, in plastids the minimal PEP RNA polymerase catalytic core is composed of four subunits: alpha, beta, beta', and beta''. When a (nuclear-encoded) sigma factor is associated with the core the holoenzyme is formed, which can initiate transcription. The cofactor is Mg(2+). Zn(2+) serves as cofactor.

Its subcellular location is the plastid. It is found in the chloroplast. The enzyme catalyses RNA(n) + a ribonucleoside 5'-triphosphate = RNA(n+1) + diphosphate. Functionally, DNA-dependent RNA polymerase catalyzes the transcription of DNA into RNA using the four ribonucleoside triphosphates as substrates. The protein is DNA-directed RNA polymerase subunit beta' of Fagopyrum esculentum subsp. ancestrale (Wild buckwheat).